Reading from the N-terminus, the 295-residue chain is Spermatogenesis-associated protein 4 (295 aa).

Residues 1–34 are disordered; it reads MAAAGQAEECLPLPAAESSKTSLPTPPAVPAGKK. Positions 48-154 constitute a Calponin-homology (CH) domain; that stretch reads SRLSRSVLRW…QEIYTLLTHQ (107 aa). The tract at residues 251-295 is disordered; the sequence is KRRYKSRGSKEKAAQPLSKSDNDGNARKEIHVKQSGNPCENTENL. Over residues 270–282 the composition is skewed to basic and acidic residues; the sequence is SDNDGNARKEIHV. The segment covering 284–295 has biased composition (polar residues); the sequence is QSGNPCENTENL.

Testis.

The protein resides in the nucleus. Functionally, may play a role in apoptosis regulation. This is Spermatogenesis-associated protein 4 (Spata4) from Mus musculus (Mouse).